A 335-amino-acid chain; its full sequence is Partner of xrn-2 protein 1 (335 aa).

Residues valine 7 to lysine 91 form the XRN2-binding (XTBD) domain. The tract at residues valine 95 to valine 119 is disordered. The segment covering aspartate 105 to lysine 114 has biased composition (basic and acidic residues).

In terms of assembly, interacts (via N-terminus) with xrn-2; the interaction is direct.

Its subcellular location is the nucleus. The protein resides in the nucleolus. The protein localises to the nucleoplasm. Functionally, plays a role in maintenance of steady-state concentration and turnover of microRNAs (miRNA) by degradation of mature miRNA in complex with the exoribonuclease xrn-2. Stabilizes and enhances the accumulation and activity of the exoribonuclease xrn-2, and thus contributes to miRNA turnover. The polypeptide is Partner of xrn-2 protein 1 (Caenorhabditis elegans).